Here is an 834-residue protein sequence, read N- to C-terminus: Semaphorin-4C (834 aa).

Residues 1 to 20 form the signal peptide; sequence MAPHWAVWLLAAGLWGLGIG. Over 21 to 664 the chain is Extracellular; that stretch reads AEMWWNLVPR…EARAPLENLG (644 aa). The region spanning 30–497 is the Sema domain; sequence RKTVSSGELV…SRSQLVQLSL (468 aa). The segment at 46-489 is dominant negative effect on myogenic differentiation; sequence SQTGIQDFLT…SKKVLFAGSR (444 aa). The cysteines at positions 99 and 110 are disulfide-linked. N-linked (GlcNAc...) asparagine glycans are attached at residues Asn-106 and Asn-121. 3 disulfides stabilise this stretch: Cys-128/Cys-137, Cys-261/Cys-370, and Cys-285/Cys-330. N-linked (GlcNAc...) asparagine glycans are attached at residues Asn-310 and Asn-419. The PSI domain occupies 499–552; that stretch reads DCTKYRFCVDCVLARDPYCAWNVNTSRCVATTSGRSGSFLVQHVANLDTSKMCN. Cystine bridges form between Cys-500–Cys-517 and Cys-509–Cys-526. Asn-522 and Asn-565 each carry an N-linked (GlcNAc...) asparagine glycan. In terms of domain architecture, Ig-like C2-type spans 557 to 645; that stretch reads KKVRSIPKNI…RLAAESYLVA (89 aa). An intrachain disulfide couples Cys-578 to Cys-628. The helical transmembrane segment at 665–685 threads the bilayer; that stretch reads LVWLAVVALGAVCLVLLLLVL. Residues 686–834 are Cytoplasmic-facing; it reads SLRRRLREEL…PDSNPEESSV (149 aa). Ser-743 carries the phosphoserine modification. A disordered region spans residues 749 to 834; it reads GHARCQPGGG…PDSNPEESSV (86 aa). Over residues 757–773 the composition is skewed to pro residues; sequence GGPPSPPPGIPGQPLPS. A PDZ-binding motif is present at residues 831-834; that stretch reads ESSV.

It belongs to the semaphorin family. In terms of assembly, interacts (via the PDZ-binding motif) with GIPC (via the PDZ domain). Interacts with NCDN. Interacts (via the PDZ-binding motif) with DLG4. Interacts with PLXNB2. As to expression, predominantly expressed in brain (at protein level).

The protein localises to the postsynaptic density membrane. The protein resides in the cytoplasmic vesicle. It is found in the secretory vesicle. It localises to the synaptic vesicle membrane. In terms of biological role, cell surface receptor for PLXNB2 that plays an important role in cell-cell signaling. PLXNB2 binding promotes downstream activation of RHOA and phosphorylation of ERBB2 at 'Tyr-1248'. Required for normal brain development, axon guidance and cell migration. Probable signaling receptor which may play a role in myogenic differentiation through activation of the stress-activated MAPK cascade. This chain is Semaphorin-4C (Sema4c), found in Mus musculus (Mouse).